The sequence spans 407 residues: Keratin, type I cuticular Ha2 (407 aa).

Residues M1 to E55 are head. The IF rod domain occupies E55–L366. The segment at K56–V90 is coil 1A. Residues Y91 to D101 are linker 1. A coil 1B region spans residues Y102–Q202. Positions Q203–V218 are linker 12. The segment at D219–E362 is coil 2. The segment at D363–Y407 is tail.

It belongs to the intermediate filament family. Cuticle of the hair shaft.

The polypeptide is Keratin, type I cuticular Ha2 (Krt32) (Mus musculus (Mouse)).